The primary structure comprises 181 residues: Probable Brix domain-containing ribosomal biogenesis protein (181 aa).

Residues 5–181 (CKVIITTSRE…RIKKVVYRHV (177 aa)) form the Brix domain.

Functionally, probably involved in the biogenesis of the ribosome. This chain is Probable Brix domain-containing ribosomal biogenesis protein, found in Pyrobaculum aerophilum (strain ATCC 51768 / DSM 7523 / JCM 9630 / CIP 104966 / NBRC 100827 / IM2).